The following is a 476-amino-acid chain: Protein DETOXIFICATION 17 (476 aa).

A run of 12 helical transmembrane segments spans residues 29–51, 70–90, 111–131, 140–160, 177–197, 205–225, 252–272, 286–306, 326–346, 363–383, 405–425, and 431–451; these read LWLS…ISVM, FASV…ETLC, FVLL…EQIL, IASV…AYGL, VFVC…LFVL, GAAL…SCYV, IAFP…LLVL, VLSI…GLGG, LAVY…VTVL, IIAY…LDGL, LGSY…HFHI, and WLGI…VTIF.

The protein belongs to the multi antimicrobial extrusion (MATE) (TC 2.A.66.1) family.

The protein resides in the membrane. This chain is Protein DETOXIFICATION 17, found in Arabidopsis thaliana (Mouse-ear cress).